A 645-amino-acid polypeptide reads, in one-letter code: ATP-dependent zinc metalloprotease FtsH 3 (645 aa).

Residues 1-11 lie on the Cytoplasmic side of the membrane; it reads MQNKRNQSRVL. The chain crosses the membrane as a helical span at residues 12–32; the sequence is WLLLIYITIGIFIYVGVNSLI. The Periplasmic portion of the chain corresponds to 33–110; sequence GTPDVSKIEY…YVRSLENSWW (78 aa). Residues 111–131 traverse the membrane as a helical segment; that stretch reads ISILTFLLPVFLLIFLFTFLF. At 132-645 the chain is on the cytoplasmic side; the sequence is RSSGGGANQG…ENNLIERKGI (514 aa). Residue 202–209 coordinates ATP; the sequence is GEPGTGKT. His424 provides a ligand contact to Zn(2+). Glu425 is an active-site residue. Zn(2+)-binding residues include His428 and Asp501.

This sequence in the central section; belongs to the AAA ATPase family. In the C-terminal section; belongs to the peptidase M41 family. Homohexamer. Requires Zn(2+) as cofactor.

It is found in the cell inner membrane. Functionally, acts as a processive, ATP-dependent zinc metallopeptidase for both cytoplasmic and membrane proteins. Plays a role in the quality control of integral membrane proteins. This Petrotoga mobilis (strain DSM 10674 / SJ95) protein is ATP-dependent zinc metalloprotease FtsH 3.